We begin with the raw amino-acid sequence, 170 residues long: Methanogen homoaconitase small subunit (170 aa).

A YLRT motif is present at residues 24 to 27 (YLRT).

This sequence belongs to the LeuD family. LeuD type 2 subfamily. As to quaternary structure, heterotetramer of 2 HacA and 2 HacB proteins. Cannot form a complex with LeuC.

The enzyme catalyses (2R)-homocitrate = (2R,3S)-homoisocitrate. The catalysed reaction is (2R)-homocitrate = cis-homoaconitate + H2O. It catalyses the reaction (2R,3S)-homoisocitrate = cis-homoaconitate + H2O. It carries out the reaction cis-(homo)2aconitate + H2O = (2R,3S)-iso(homo)2citrate. The enzyme catalyses cis-(homo)3aconitate + H2O = (2R,3S)-iso(homo)3citrate. The catalysed reaction is (R)-malate = maleate + H2O. It catalyses the reaction cis-aconitate + H2O = D-threo-isocitrate. It participates in organic acid metabolism; 2-oxosuberate biosynthesis. In terms of biological role, component of a hydro-lyase with broad substrate specificity for cis-unsaturated tricarboxylic acids. Catalyzes both the reversible dehydration of (R)-homocitrate ((R)-2-hydroxybutane-1,2,4-tricarboxylate) to produce cis-homoaconitate ((Z)-but-1-ene-1,2,4-tricarboxylate), and its hydration to homoisocitrate ((1R,2S)-1-hydroxybutane-1,2,4-tricarboxylate). Is also able to hydrate the analogous longer chain substrates cis-homo(2)-aconitate, cis-homo(3)-aconitate, and even the non-physiological cis-homo(4)-aconitate with similar efficiency. These reactions are part of the biosynthesis pathway of coenzyme B. Can also catalyze the hydration of maleate to (R)-malate, and that of cis-aconitate. Cannot catalyze the hydration of citraconate and the dehydration of (S)-homocitrate, citramalate, 2-isopropylmalate, 3-isopropylmalate, citrate or threo-DL-isocitrate. The polypeptide is Methanogen homoaconitase small subunit (hacB) (Methanocaldococcus jannaschii (strain ATCC 43067 / DSM 2661 / JAL-1 / JCM 10045 / NBRC 100440) (Methanococcus jannaschii)).